We begin with the raw amino-acid sequence, 901 residues long: Aconitate hydratase A (901 aa).

Residues C443, C509, and C512 each coordinate [4Fe-4S] cluster.

It belongs to the aconitase/IPM isomerase family. In terms of assembly, monomer. [4Fe-4S] cluster is required as a cofactor.

The catalysed reaction is citrate = D-threo-isocitrate. The enzyme catalyses (2S,3R)-3-hydroxybutane-1,2,3-tricarboxylate = 2-methyl-cis-aconitate + H2O. The protein operates within carbohydrate metabolism; tricarboxylic acid cycle; isocitrate from oxaloacetate: step 2/2. It functions in the pathway organic acid metabolism; propanoate degradation. Involved in the catabolism of short chain fatty acids (SCFA) via the tricarboxylic acid (TCA)(acetyl degradation route) and probably the 2-methylcitrate cycle I (propionate degradation route). Catalyzes the reversible isomerization of citrate to isocitrate via cis-aconitate. Could catalyze the hydration of 2-methyl-cis-aconitate to yield (2R,3S)-2-methylisocitrate. The apo form of AcnA functions as a RNA-binding regulatory protein. The chain is Aconitate hydratase A (acnA) from Staphylococcus aureus (strain COL).